The chain runs to 73 residues: Large ribosomal subunit protein bL31 (73 aa).

Residues Cys-16, Cys-18, Cys-37, and Cys-40 each contribute to the Zn(2+) site.

This sequence belongs to the bacterial ribosomal protein bL31 family. Type A subfamily. As to quaternary structure, part of the 50S ribosomal subunit. Zn(2+) serves as cofactor.

Binds the 23S rRNA. The sequence is that of Large ribosomal subunit protein bL31 from Blochmanniella floridana.